The following is a 710-amino-acid chain: Proline-rich receptor-like protein kinase PERK13 (710 aa).

A disordered region spans residues 1–229 (MSDSPTSSPP…SVPPPANSGG (229 aa)). Over 1 to 235 (MSDSPTSSPP…NSGGGYQGKT (235 aa)) the chain is Extracellular. Pro residues-rich tracts occupy residues 7 to 21 (SSPP…PPPD), 29 to 130 (APPP…PPPP), 137 to 151 (PPAP…PPAS), and 168 to 188 (ATSP…PNAP). An N-linked (GlcNAc...) asparagine glycan is attached at N191. Over residues 209–220 (SPSRGVPSSGNS) the composition is skewed to low complexity. The chain crosses the membrane as a helical span at residues 236-256 (MAGFAIAGFAVIALMAVVFLV). Residues 257 to 710 (RRKKKRNIDA…ENRNFNNRRY (454 aa)) lie on the Cytoplasmic side of the membrane. Residues 289-334 (QNPTKGYSGPGGYNSQQQSNSGNSFGSQRGGGGYTRSGSAPDSAVM) are disordered. Positions 301 to 315 (YNSQQQSNSGNSFGS) are enriched in low complexity. T342 carries the phosphothreonine modification. The region spanning 353 to 619 (FSKHNILGEG…RHSGPKRPRM (267 aa)) is the Protein kinase domain. Residues 359 to 367 (LGEGGFGCV) and K381 each bind ATP. At Y426 the chain carries Phosphotyrosine. D477 acts as the Proton acceptor in catalysis. A Phosphoserine modification is found at S510. Phosphothreonine is present on residues T511 and T516. Y524 is subject to Phosphotyrosine. Residues 676-710 (SGDYSVQDSRKGSNGASSEFTRNETENRNFNNRRY) form a disordered region.

It belongs to the protein kinase superfamily. Ser/Thr protein kinase family. As to quaternary structure, interacts with KIPK1 and KIPK2 (via its cytosolic domain). As to expression, mostly expressed in roots, especially in root hairs.

Its subcellular location is the cell membrane. It catalyses the reaction L-seryl-[protein] + ATP = O-phospho-L-seryl-[protein] + ADP + H(+). It carries out the reaction L-threonyl-[protein] + ATP = O-phospho-L-threonyl-[protein] + ADP + H(+). Its function is as follows. Negatively regulates root hair elongation. This is Proline-rich receptor-like protein kinase PERK13 (PERK13) from Arabidopsis thaliana (Mouse-ear cress).